The chain runs to 328 residues: Dihydroorotate dehydrogenase (quinone), mitochondrial (328 aa).

Residues 21–38 (AHGLSIAGLKTGLVTGSA) traverse the membrane as a helical segment. FMN-binding positions include 61–65 (AGYDK) and Thr-85. A substrate-binding site is contributed by Lys-65. 110-114 (NRLGF) is a substrate binding site. FMN-binding residues include Asn-139 and Asn-170. 170–175 (NISSPN) is a substrate binding site. Ser-173 (nucleophile) is an active-site residue. 2 residues coordinate FMN: Lys-215 and Ser-243. 244–245 (NT) is a binding site for substrate. FMN-binding residues include Gly-266 and Gly-295.

Belongs to the dihydroorotate dehydrogenase family. Type 2 subfamily. The cofactor is FMN.

It localises to the mitochondrion inner membrane. The enzyme catalyses (S)-dihydroorotate + a quinone = orotate + a quinol. Its pathway is pyrimidine metabolism; UMP biosynthesis via de novo pathway; orotate from (S)-dihydroorotate (quinone route): step 1/1. Functionally, catalyzes the conversion of dihydroorotate to orotate with quinone as electron acceptor. The sequence is that of Dihydroorotate dehydrogenase (quinone), mitochondrial (URA1) from Cyclocybe aegerita (Black poplar mushroom).